An 81-amino-acid polypeptide reads, in one-letter code: Small ribosomal subunit protein bS16 (81 aa).

It belongs to the bacterial ribosomal protein bS16 family.

The polypeptide is Small ribosomal subunit protein bS16 (Clostridium botulinum (strain Eklund 17B / Type B)).